The primary structure comprises 305 residues: Coenzyme PQQ synthesis protein B (305 aa).

The protein belongs to the PqqB family.

The protein operates within cofactor biosynthesis; pyrroloquinoline quinone biosynthesis. In terms of biological role, may be involved in the transport of PQQ or its precursor to the periplasm. This Cupriavidus necator (strain ATCC 17699 / DSM 428 / KCTC 22496 / NCIMB 10442 / H16 / Stanier 337) (Ralstonia eutropha) protein is Coenzyme PQQ synthesis protein B.